Reading from the N-terminus, the 233-residue chain is MSILQSVHNSFTPVHKEGYPFIIAFFVLSLIFGWVWSPLFWCGLVLTVWCIYFFRDPNRVIPVNSNWIISPADGRISFVEPCIPPEELGLGNEEMIRISVFMDIFSCHINRIPISGKVESIVYRPGQFANAELDKASQFNERNGMVIDSKHGKIGVVQIAGAIARRIVCWSKENDSVITGQRFGLIRFGSRLDIYIPTEVKLRVAVGQTAIAGETVLGSFDDKSSATIDFRFD.

S190 (schiff-base intermediate with substrate; via pyruvic acid) is an active-site residue. S190 is modified (pyruvic acid (Ser); by autocatalysis).

The protein belongs to the phosphatidylserine decarboxylase family. PSD-A subfamily. In terms of assembly, heterodimer of a large membrane-associated beta subunit and a small pyruvoyl-containing alpha subunit. Pyruvate is required as a cofactor. Is synthesized initially as an inactive proenzyme. Formation of the active enzyme involves a self-maturation process in which the active site pyruvoyl group is generated from an internal serine residue via an autocatalytic post-translational modification. Two non-identical subunits are generated from the proenzyme in this reaction, and the pyruvate is formed at the N-terminus of the alpha chain, which is derived from the carboxyl end of the proenzyme. The post-translation cleavage follows an unusual pathway, termed non-hydrolytic serinolysis, in which the side chain hydroxyl group of the serine supplies its oxygen atom to form the C-terminus of the beta chain, while the remainder of the serine residue undergoes an oxidative deamination to produce ammonia and the pyruvoyl prosthetic group on the alpha chain.

Its subcellular location is the cell membrane. The enzyme catalyses a 1,2-diacyl-sn-glycero-3-phospho-L-serine + H(+) = a 1,2-diacyl-sn-glycero-3-phosphoethanolamine + CO2. Its pathway is phospholipid metabolism; phosphatidylethanolamine biosynthesis; phosphatidylethanolamine from CDP-diacylglycerol: step 2/2. In terms of biological role, catalyzes the formation of phosphatidylethanolamine (PtdEtn) from phosphatidylserine (PtdSer). The chain is Phosphatidylserine decarboxylase proenzyme from Bartonella quintana (strain Toulouse) (Rochalimaea quintana).